Here is a 344-residue protein sequence, read N- to C-terminus: N,N-dimethyltransferase OxyT (344 aa).

S-adenosyl-L-methionine is bound by residues aspartate 205 and 231 to 233; that span reads GDF.

Belongs to the class I-like SAM-binding methyltransferase superfamily. Cation-independent O-methyltransferase family.

It carries out the reaction 4-amino-4-dedimethylamino-anhydrotetracycline + S-adenosyl-L-methionine = 4-methylamino-4-dedimethylamino-anhydrotetracycline + S-adenosyl-L-homocysteine + H(+). It catalyses the reaction 4-methylamino-4-dedimethylamino-anhydrotetracycline + S-adenosyl-L-methionine = anhydrotetracycline + S-adenosyl-L-homocysteine + H(+). The protein operates within antibiotic biosynthesis; oxytetracycline biosynthesis. Involved in the biosynthesis of the tetracycline antibiotic, oxytetracycline. Catalyzes the dimethylation of 4-amino-4-de(dimethylamino)anhydrotetracycline (4-amino-ATC) to yield anhydrotetracycline (ATC). Also able to catalyze the dimethylation of 7-chloro-, 6-demethyl-, 2-decarboxamido-2-nitrile-, and 4-methylamino-derivatives of 4-amino-4-de(dimethylamino)anhydrotetracycline. The chain is N,N-dimethyltransferase OxyT from Streptomyces rimosus.